A 353-amino-acid chain; its full sequence is Colistin resistance protein EmrA (353 aa).

A helical transmembrane segment spans residues 21-41 (WGVFSVLLLFLVAGILYYFFV). A coiled-coil region spans residues 132-204 (VVAAQADLAR…QASRAQLLAD (73 aa)).

It belongs to the membrane fusion protein (MFP) (TC 8.A.1) family.

Its subcellular location is the cell inner membrane. In terms of biological role, probably part of an efflux pump system that contributes to adaptation to osmotic stress and resistance to colistin. This Acinetobacter baumannii (strain ATCC 17978 / DSM 105126 / CIP 53.77 / LMG 1025 / NCDC KC755 / 5377) protein is Colistin resistance protein EmrA.